Reading from the N-terminus, the 190-residue chain is TATA-box-binding protein (190 aa).

A run of 2 repeats spans residues 11–87 (IENI…IEML) and 102–178 (IQNM…LREL).

It belongs to the TBP family.

Functionally, general factor that plays a role in the activation of archaeal genes transcribed by RNA polymerase. Binds specifically to the TATA box promoter element which lies close to the position of transcription initiation. This is TATA-box-binding protein (tbp) from Thermococcus kodakarensis (strain ATCC BAA-918 / JCM 12380 / KOD1) (Pyrococcus kodakaraensis (strain KOD1)).